The chain runs to 282 residues: ATP synthase gamma chain (282 aa).

This sequence belongs to the ATPase gamma chain family. As to quaternary structure, F-type ATPases have 2 components, CF(1) - the catalytic core - and CF(0) - the membrane proton channel. CF(1) has five subunits: alpha(3), beta(3), gamma(1), delta(1), epsilon(1). CF(0) has three main subunits: a, b and c.

The protein resides in the cell membrane. Its function is as follows. Produces ATP from ADP in the presence of a proton gradient across the membrane. The gamma chain is believed to be important in regulating ATPase activity and the flow of protons through the CF(0) complex. This is ATP synthase gamma chain from Clostridium acetobutylicum (strain ATCC 824 / DSM 792 / JCM 1419 / IAM 19013 / LMG 5710 / NBRC 13948 / NRRL B-527 / VKM B-1787 / 2291 / W).